Reading from the N-terminus, the 348-residue chain is Chaperone protein DnaJ (348 aa).

A J domain is found at 3 to 65 (DLYGILGVDH…EQRQRYDRHV (63 aa)). A CR-type zinc finger spans residues 109 to 191 (GGSQVVKIDS…CYGNGSRSAP (83 aa)). 8 residues coordinate Zn(2+): C122, C125, C139, C142, C165, C168, C179, and C182. 4 CXXCXGXG motif repeats span residues 122–129 (CDVCNGTR), 139–146 (CFDCNGSG), 165–172 (CSKCRGNG), and 179–186 (CRRCYGNG).

It belongs to the DnaJ family. In terms of assembly, homodimer. The cofactor is Zn(2+).

Its subcellular location is the cytoplasm. Participates actively in the response to hyperosmotic and heat shock by preventing the aggregation of stress-denatured proteins and by disaggregating proteins, also in an autonomous, DnaK-independent fashion. Unfolded proteins bind initially to DnaJ; upon interaction with the DnaJ-bound protein, DnaK hydrolyzes its bound ATP, resulting in the formation of a stable complex. GrpE releases ADP from DnaK; ATP binding to DnaK triggers the release of the substrate protein, thus completing the reaction cycle. Several rounds of ATP-dependent interactions between DnaJ, DnaK and GrpE are required for fully efficient folding. Also involved, together with DnaK and GrpE, in the DNA replication of plasmids through activation of initiation proteins. The chain is Chaperone protein DnaJ from Tropheryma whipplei (strain TW08/27) (Whipple's bacillus).